The following is a 120-amino-acid chain: UPF0091 protein PH1455 (120 aa).

Belongs to the UPF0091 family.

The protein is UPF0091 protein PH1455 of Pyrococcus horikoshii (strain ATCC 700860 / DSM 12428 / JCM 9974 / NBRC 100139 / OT-3).